The chain runs to 1060 residues: Protein FAM184B (1060 aa).

Positions 1–17 are enriched in polar residues; the sequence is MASALNSKINPPGTCQG. The interval 1-24 is disordered; it reads MASALNSKINPPGTCQGSKADGGA. Residues 51 to 159 are a coiled coil; the sequence is ALNTRQDEAE…EMLELKADYE (109 aa). Residues 165-191 are disordered; the sequence is LTSHEATPQGRLPQESPETKSEPGQGP. Coiled-coil stretches lie at residues 192-333 and 402-502; these read EMQE…DRMM and MKQQ…RLEE. Disordered regions lie at residues 532-566, 681-700, and 762-803; these read QDPC…EERT, TEER…HQTH, and GRQQ…GSGE. Basic and acidic residues-rich tracts occupy residues 536-554, 681-690, and 773-785; these read LKLD…KLAA, TEERLKKESS, and DSKD…EERG. A coiled-coil region spans residues 584-769; that stretch reads LKEKTSKIQR…ALGRQQASSQ (186 aa). Residues 806–934 adopt a coiled-coil conformation; sequence GLWEENAQLQ…KQLTEERRFH (129 aa). Composition is skewed to polar residues over residues 994–1009 and 1018–1030; these read SRIN…SLDP and KPNQ…TATR. The disordered stretch occupies residues 994 to 1050; it reads SRINAPPITTSPSLDPSPSCGRTYKPNQSTDAKTATRTPDGETAQAKEVQQKQGSPH.

Belongs to the FAM184 family.

The chain is Protein FAM184B (FAM184B) from Homo sapiens (Human).